A 71-amino-acid chain; its full sequence is Large ribosomal subunit protein bL31 (71 aa).

Zn(2+)-binding residues include Cys-16, Cys-18, Cys-38, and Cys-41.

It belongs to the bacterial ribosomal protein bL31 family. Type A subfamily. As to quaternary structure, part of the 50S ribosomal subunit. The cofactor is Zn(2+).

Functionally, binds the 23S rRNA. The polypeptide is Large ribosomal subunit protein bL31 (Francisella tularensis subsp. mediasiatica (strain FSC147)).